The chain runs to 801 residues: Phenylalanine--tRNA ligase beta subunit (801 aa).

A tRNA-binding domain is found at 39–153 (AEGLSKLVVG…EEAVPGDAIF (115 aa)). One can recognise a B5 domain in the interval 406-481 (TEPVEVSTSL…RIYGYDKLPT (76 aa)). Residues Asp-459, Asp-465, Glu-468, and Glu-469 each coordinate Mg(2+). An FDX-ACB domain is found at 708–801 (TKFPAMTRDI…LTEQVGAEVR (94 aa)).

This sequence belongs to the phenylalanyl-tRNA synthetase beta subunit family. Type 1 subfamily. As to quaternary structure, tetramer of two alpha and two beta subunits. Requires Mg(2+) as cofactor.

It is found in the cytoplasm. It catalyses the reaction tRNA(Phe) + L-phenylalanine + ATP = L-phenylalanyl-tRNA(Phe) + AMP + diphosphate + H(+). This Streptococcus pyogenes serotype M18 (strain MGAS8232) protein is Phenylalanine--tRNA ligase beta subunit.